Consider the following 105-residue polypeptide: DNA-directed RNA polymerase subunit Rpo13 (105 aa).

Composition is skewed to basic and acidic residues over residues 1-10 (MSEDDSKKEP) and 70-80 (FDDVARSYSKA). Disordered regions lie at residues 1 to 35 (MSED…GGEF) and 70 to 105 (FDDV…EEEE). Basic residues predominate over residues 81–97 (DKKKRRVEKKPKKGKVT).

This sequence belongs to the archaeal Rpo13 RNA polymerase subunit family. Part of the 13-subunit RNA polymerase.

The protein resides in the cytoplasm. The enzyme catalyses RNA(n) + a ribonucleoside 5'-triphosphate = RNA(n+1) + diphosphate. In terms of biological role, DNA-dependent RNA polymerase catalyzes the transcription of DNA into RNA using the four ribonucleoside triphosphates as substrates. In vitro binds dsDNA but not ssDNA. This chain is DNA-directed RNA polymerase subunit Rpo13, found in Sulfolobus acidocaldarius (strain ATCC 33909 / DSM 639 / JCM 8929 / NBRC 15157 / NCIMB 11770).